The chain runs to 477 residues: Alkaline phosphatase (477 aa).

Asp44 is a binding site for Mg(2+). Asp44 serves as a coordination point for Zn(2+). Ser94 (phosphoserine intermediate) is an active-site residue. Asn124 carries an N-linked (GlcNAc...) asparagine glycan. His155 and Thr157 together coordinate Mg(2+). Cys165 and Cys185 are joined by a disulfide. A glycan (N-linked (GlcNAc...) asparagine) is linked at Asn214. Glu315 lines the Mg(2+) pocket. Zn(2+) is bound by residues Asp320, His324, Asp361, and His362. The N-linked (GlcNAc...) asparagine glycan is linked to Asn413. His437 is a binding site for Zn(2+).

In terms of assembly, homodimer. Mg(2+) serves as cofactor. Requires Zn(2+) as cofactor.

It localises to the cell membrane. The catalysed reaction is a phosphate monoester + H2O = an alcohol + phosphate. The protein is Alkaline phosphatase of Gadus morhua (Atlantic cod).